We begin with the raw amino-acid sequence, 76 residues long: Large ribosomal subunit protein bL31 (76 aa).

Belongs to the bacterial ribosomal protein bL31 family. Type A subfamily. In terms of assembly, part of the 50S ribosomal subunit.

Its function is as follows. Binds the 23S rRNA. The polypeptide is Large ribosomal subunit protein bL31 (Methylocella silvestris (strain DSM 15510 / CIP 108128 / LMG 27833 / NCIMB 13906 / BL2)).